Consider the following 751-residue polypeptide: Catalase-peroxidase (751 aa).

Residues 1-24 (MADKCPFHNQAPKPNVAGSGTQNR) form a disordered region. Residues 95–241 (WHSAGTYRTF…LAAAHMGLIY (147 aa)) constitute a cross-link (tryptophyl-tyrosyl-methioninium (Trp-Tyr) (with M-267)). The Proton acceptor role is filled by histidine 96. Residues 241 to 267 (YVNPEGPDGNPDPVAAARDIRTTFARM) constitute a cross-link (tryptophyl-tyrosyl-methioninium (Tyr-Met) (with W-95)). A heme b-binding site is contributed by histidine 282.

It belongs to the peroxidase family. Peroxidase/catalase subfamily. In terms of assembly, homodimer or homotetramer. The cofactor is heme b. Formation of the three residue Trp-Tyr-Met cross-link is important for the catalase, but not the peroxidase activity of the enzyme.

Its subcellular location is the cytoplasm. The catalysed reaction is H2O2 + AH2 = A + 2 H2O. It carries out the reaction 2 H2O2 = O2 + 2 H2O. Functionally, bifunctional enzyme with both catalase and broad-spectrum peroxidase activity. The protein is Catalase-peroxidase of Aspergillus oryzae (strain ATCC 42149 / RIB 40) (Yellow koji mold).